We begin with the raw amino-acid sequence, 203 residues long: Proteasome subunit beta 2 (203 aa).

Residues 1–10 constitute a propeptide, removed in mature form; by autocatalysis; sequence MNLQNKILKG. The Nucleophile role is filled by T11.

The protein belongs to the peptidase T1B family. The 20S proteasome core is composed of 14 alpha and 14 beta subunits that assemble into four stacked heptameric rings, resulting in a barrel-shaped structure. The two inner rings, each composed of seven catalytic beta subunits, are sandwiched by two outer rings, each composed of seven alpha subunits. The catalytic chamber with the active sites is on the inside of the barrel. Has a gated structure, the ends of the cylinder being occluded by the N-termini of the alpha-subunits. Is capped at one or both ends by the proteasome regulatory ATPase, PAN.

It localises to the cytoplasm. It carries out the reaction Cleavage of peptide bonds with very broad specificity.. Its activity is regulated as follows. The formation of the proteasomal ATPase PAN-20S proteasome complex, via the docking of the C-termini of PAN into the intersubunit pockets in the alpha-rings, triggers opening of the gate for substrate entry. Interconversion between the open-gate and close-gate conformations leads to a dynamic regulation of the 20S proteasome proteolysis activity. Functionally, component of the proteasome core, a large protease complex with broad specificity involved in protein degradation. This is Proteasome subunit beta 2 from Sulfolobus acidocaldarius (strain ATCC 33909 / DSM 639 / JCM 8929 / NBRC 15157 / NCIMB 11770).